Here is a 471-residue protein sequence, read N- to C-terminus: Tryptophanase (471 aa).

N6-acetyllysine is present on residues lysine 5, lysine 115, and lysine 156. Lysine 270 is modified (N6-(pyridoxal phosphate)lysine). Lysine 450 carries the N6-acetyllysine modification.

Belongs to the beta-eliminating lyase family. In terms of assembly, homotetramer. Requires pyridoxal 5'-phosphate as cofactor.

The catalysed reaction is L-tryptophan + H2O = indole + pyruvate + NH4(+). It participates in amino-acid degradation; L-tryptophan degradation via pyruvate pathway; indole and pyruvate from L-tryptophan: step 1/1. The protein is Tryptophanase of Escherichia fergusonii (strain ATCC 35469 / DSM 13698 / CCUG 18766 / IAM 14443 / JCM 21226 / LMG 7866 / NBRC 102419 / NCTC 12128 / CDC 0568-73).